A 318-amino-acid polypeptide reads, in one-letter code: Thymidylate synthase (318 aa).

Residues Arg25 and 180-181 each bind dUMP; that span reads RR. Cys200 serves as the catalytic Nucleophile. Residues 220 to 223, Asn231, and 261 to 263 contribute to the dUMP site; these read RSGD and HIY. Residue Asp223 coordinates (6R)-5,10-methylene-5,6,7,8-tetrahydrofolate. Ala317 provides a ligand contact to (6R)-5,10-methylene-5,6,7,8-tetrahydrofolate.

This sequence belongs to the thymidylate synthase family. Bacterial-type ThyA subfamily. As to quaternary structure, homodimer.

The protein resides in the cytoplasm. It carries out the reaction dUMP + (6R)-5,10-methylene-5,6,7,8-tetrahydrofolate = 7,8-dihydrofolate + dTMP. It participates in pyrimidine metabolism; dTTP biosynthesis. Its function is as follows. Catalyzes the reductive methylation of 2'-deoxyuridine-5'-monophosphate (dUMP) to 2'-deoxythymidine-5'-monophosphate (dTMP) while utilizing 5,10-methylenetetrahydrofolate (mTHF) as the methyl donor and reductant in the reaction, yielding dihydrofolate (DHF) as a by-product. This enzymatic reaction provides an intracellular de novo source of dTMP, an essential precursor for DNA biosynthesis. The sequence is that of Thymidylate synthase from Bacillus thuringiensis subsp. konkukian (strain 97-27).